The following is a 283-amino-acid chain: NAD kinase (283 aa).

The active-site Proton acceptor is aspartate 69. NAD(+) is bound by residues 69-70 (DG), 138-139 (NE), lysine 166, aspartate 168, leucine 176, 179-184 (TAYNLS), and glutamine 235.

This sequence belongs to the NAD kinase family. A divalent metal cation is required as a cofactor.

The protein resides in the cytoplasm. The enzyme catalyses NAD(+) + ATP = ADP + NADP(+) + H(+). Its function is as follows. Involved in the regulation of the intracellular balance of NAD and NADP, and is a key enzyme in the biosynthesis of NADP. Catalyzes specifically the phosphorylation on 2'-hydroxyl of the adenosine moiety of NAD to yield NADP. This Helicobacter acinonychis (strain Sheeba) protein is NAD kinase.